Consider the following 318-residue polypeptide: tRNA uridine(34) hydroxylase (318 aa).

The Rhodanese domain maps to 125-219 (QDPNTVVIDA…YGTSKDTEGK (95 aa)). Cys-179 (cysteine persulfide intermediate) is an active-site residue.

The protein belongs to the TrhO family.

The catalysed reaction is uridine(34) in tRNA + AH2 + O2 = 5-hydroxyuridine(34) in tRNA + A + H2O. In terms of biological role, catalyzes oxygen-dependent 5-hydroxyuridine (ho5U) modification at position 34 in tRNAs. The protein is tRNA uridine(34) hydroxylase of Acholeplasma laidlawii (strain PG-8A).